Consider the following 93-residue polypeptide: UPF0358 protein BBR47_22520 (93 aa).

This sequence belongs to the UPF0358 family.

The chain is UPF0358 protein BBR47_22520 from Brevibacillus brevis (strain 47 / JCM 6285 / NBRC 100599).